We begin with the raw amino-acid sequence, 586 residues long: Serine/threonine-protein phosphatase 2A 56 kDa regulatory subunit delta isoform (586 aa).

The segment at 1–80 (MSPSPSSSGK…QSSSRFNLSK (80 aa)) is disordered. Repeat copies occupy residues 21–22 (QP), 23–24 (QP), 25–26 (QP), 27–28 (QP), 29–30 (QP), and 31–32 (QP). Residues 21–36 (QPQPQPQPQPQPQSQP) form an 8 X 2 AA approximate tandem repeats of Q-P region. Pro residues predominate over residues 23 to 35 (QPQPQPQPQPQSQ). One copy of the 7; approximate repeat lies at 33–34 (QS). The stretch at 35–36 (QP) is repeat 8. Residues 36–45 (PPSSNKRPSN) are compositionally biased toward low complexity. Threonine 47 is modified (phosphothreonine). 3 positions are modified to phosphoserine: serine 72, serine 73, and serine 74. The SH3-binding; class I signature appears at 507 to 514 (RAPPPLPP). The Nuclear localization signal motif lies at 532–549 (KRTVETEAVQMLKDIKKE). 2 positions are modified to phosphoserine: serine 557 and serine 582.

The protein belongs to the phosphatase 2A regulatory subunit B56 family. In terms of assembly, PP2A consists of a common heterodimeric core enzyme, composed of a 36 kDa catalytic subunit (subunit C) and a 65 kDa constant regulatory subunit (PR65 or subunit A), that associates with a variety of regulatory subunits. Proteins that associate with the core dimer include three families of regulatory subunits B (the R2/B/PR55/B55, R3/B''/PR72/PR130/PR59 and R5/B'/B56 families), the 48 kDa variable regulatory subunit, viral proteins, and cell signaling molecules. Interacts with the PP2A A subunit PPP2R1A. Interacts with SGO1. Interacts with ADCY8. Highly expressed in brain.

The protein resides in the nucleus. The B regulatory subunit might modulate substrate selectivity and catalytic activity, and might also direct the localization of the catalytic enzyme to a particular subcellular compartment. In Oryctolagus cuniculus (Rabbit), this protein is Serine/threonine-protein phosphatase 2A 56 kDa regulatory subunit delta isoform (PPP2R5D).